A 519-amino-acid polypeptide reads, in one-letter code: Probable pectinesterase/pectinesterase inhibitor 36 (519 aa).

A signal peptide spans 1 to 25 (MSTFVKVTDLITIMFFLAIAAVITA). Residues 27–141 (NTAELDVLEM…TFVLHEALAF (115 aa)) are pectinesterase inhibitor 36. N-linked (GlcNAc...) asparagine glycosylation is found at N92 and N130. Residues 147–196 (GHMKKRLHGPARQGHGPTRPKHRPTRPNHGPGRSHHGPSRPNQNGGMLVS) are disordered. The segment covering 164 to 184 (TRPKHRPTRPNHGPGRSHHGP) has biased composition (basic residues). A compositionally biased stretch (polar residues) spans 186 to 196 (RPNQNGGMLVS). The segment at 205 to 505 (DFVVARDGSA…FTVSRFIQGD (301 aa)) is pectinesterase 36. Substrate-binding residues include T283 and Q313. Catalysis depends on D336, which acts as the Proton donor; for pectinesterase activity. The Nucleophile; for pectinesterase activity role is filled by D357. Substrate is bound by residues R425 and W427.

This sequence in the N-terminal section; belongs to the PMEI family. It in the C-terminal section; belongs to the pectinesterase family. In terms of tissue distribution, expressed in siliques.

It localises to the secreted. The protein localises to the cell wall. The enzyme catalyses [(1-&gt;4)-alpha-D-galacturonosyl methyl ester](n) + n H2O = [(1-&gt;4)-alpha-D-galacturonosyl](n) + n methanol + n H(+). Its pathway is glycan metabolism; pectin degradation; 2-dehydro-3-deoxy-D-gluconate from pectin: step 1/5. Functionally, acts in the modification of cell walls via demethylesterification of cell wall pectin. This is Probable pectinesterase/pectinesterase inhibitor 36 (PME36) from Arabidopsis thaliana (Mouse-ear cress).